Consider the following 633-residue polypeptide: MATAEAQVNVNRNLQKQDLRNLEVSNLTPLSPEVISRQATINIGTIGHVAHGKSTVVKAISGVQTVRFKNELERNITIKLERLSEKKIKLLLKSKHQRHKYDIQQQKLLRILAERRKARAMTPLAPASVLAPSMETARPRLRSTSLNSLSPSNSSGYGSILGCDDSDQSSQLVLKPNVLKRRRSNCVQIPTPAAKRSRKNDGTTVKRRPKGEYIVEKIESVEVVQFQPVFFVKWLGYDVSANTWESYVNLSDCAEMEKFVERHLQLHQHYIAQITGELDTQLSDIPQTEDLKTISIAEIDAYDPLELQIDFILLAQYRAAASRSQREPERIGARALHRMQVRRSHFARRKQLIDLLLFEHRMNRVELPSPPIRVENNWDLDTIDSGFKYIQKNIIGEGVPKPQAGLVGCMCRHQSGEQCTASSMCCGRMAGEIFAYDRTTGRLRLRPGSAIYECNSRCSCDESCTNRVVQNGRKHPLVLFKTSNGSGWGVRTPQPLKKGVFVCEYIGEIITCEEANERGKAYDDNGRTYLFDLDYNTSRDSEYTVDAANFGNISHFINHSCDPNLAVFPCWIEHLNTALPHLVFFTIRPIKAGEELSFDYIRADNEEVPYENLSTAARVQCRCGAANCRKVLF.

The Chromo domain maps to 213–271 (YIVEKIESVEVVQFQPVFFVKWLGYDVSANTWESYVNLSDCAEMEKFVERHLQLHQHYI). The Pre-SET domain maps to 407–472 (VGCMCRHQSG…SCTNRVVQNG (66 aa)). Residues cysteine 409, cysteine 411, cysteine 419, cysteine 425, cysteine 426, cysteine 454, cysteine 458, cysteine 460, and cysteine 464 each contribute to the Zn(2+) site. Residues 475 to 601 (HPLVLFKTSN…AGEELSFDYI (127 aa)) enclose the SET domain. Residues 486 to 488 (SGW), tyrosine 529, and 558 to 559 (NH) contribute to the S-adenosyl-L-methionine site. Cysteine 561, cysteine 621, cysteine 623, and cysteine 628 together coordinate Zn(2+). Positions 617-633 (ARVQCRCGAANCRKVLF) constitute a Post-SET domain.

It belongs to the class V-like SAM-binding methyltransferase superfamily. Histone-lysine methyltransferase family. Suvar3-9 subfamily. As to quaternary structure, interacts with Su(var)205 and Su(var)3-7. Probably associates with HDAC1/Rpd3.

The protein resides in the nucleus. It is found in the chromosome. Its subcellular location is the centromere. The enzyme catalyses L-lysyl(9)-[histone H3] + 3 S-adenosyl-L-methionine = N(6),N(6),N(6)-trimethyl-L-lysyl(9)-[histone H3] + 3 S-adenosyl-L-homocysteine + 3 H(+). Functionally, histone methyltransferase that specifically trimethylates 'Lys-9' of histone H3 using monomethylated H3 'Lys-9' as substrate. H3 'Lys-9' trimethylation represents a specific tag for epigenetic transcriptional repression by recruiting Su(var)205/HP1 to methylated histones. Mainly functions in heterochromatin regions, thereby playing a central role in the establishment of constitutive heterochromatin at pericentric regions. Involved in heterochromatic gene silencing including the modification of position-effect-variegation. The sequence is that of Histone-lysine N-methyltransferase Su(var)3-9 (Su(var)3-9) from Drosophila pseudoobscura pseudoobscura (Fruit fly).